The sequence spans 136 residues: 1,4-dihydroxy-2-naphthoyl-CoA hydrolase (136 aa).

Aspartate 16 is a catalytic residue.

The protein belongs to the 4-hydroxybenzoyl-CoA thioesterase family. DHNA-CoA hydrolase subfamily.

The catalysed reaction is 1,4-dihydroxy-2-naphthoyl-CoA + H2O = 1,4-dihydroxy-2-naphthoate + CoA + H(+). It functions in the pathway cofactor biosynthesis; phylloquinone biosynthesis. The protein operates within quinol/quinone metabolism; 1,4-dihydroxy-2-naphthoate biosynthesis; 1,4-dihydroxy-2-naphthoate from chorismate: step 7/7. Functionally, catalyzes the hydrolysis of 1,4-dihydroxy-2-naphthoyl-CoA (DHNA-CoA) to 1,4-dihydroxy-2-naphthoate (DHNA), a reaction involved in phylloquinone (vitamin K1) biosynthesis. The protein is 1,4-dihydroxy-2-naphthoyl-CoA hydrolase of Synechococcus sp. (strain ATCC 27144 / PCC 6301 / SAUG 1402/1) (Anacystis nidulans).